The chain runs to 283 residues: Pantothenate synthetase (283 aa).

30–37 is a binding site for ATP; sequence MGNLHDGH. The active-site Proton donor is the H37. Residue Q61 participates in (R)-pantoate binding. Q61 contacts beta-alanine. 149–152 lines the ATP pocket; the sequence is GEKD. Residue Q155 participates in (R)-pantoate binding. An ATP-binding site is contributed by 186-189; sequence LSSR.

Belongs to the pantothenate synthetase family. As to quaternary structure, homodimer.

The protein resides in the cytoplasm. It carries out the reaction (R)-pantoate + beta-alanine + ATP = (R)-pantothenate + AMP + diphosphate + H(+). It participates in cofactor biosynthesis; (R)-pantothenate biosynthesis; (R)-pantothenate from (R)-pantoate and beta-alanine: step 1/1. In terms of biological role, catalyzes the condensation of pantoate with beta-alanine in an ATP-dependent reaction via a pantoyl-adenylate intermediate. This is Pantothenate synthetase from Escherichia coli O6:H1 (strain CFT073 / ATCC 700928 / UPEC).